Here is a 132-residue protein sequence, read N- to C-terminus: Small ribosomal subunit protein uS8 (132 aa).

This sequence belongs to the universal ribosomal protein uS8 family. In terms of assembly, part of the 30S ribosomal subunit. Contacts proteins S5 and S12.

In terms of biological role, one of the primary rRNA binding proteins, it binds directly to 16S rRNA central domain where it helps coordinate assembly of the platform of the 30S subunit. The chain is Small ribosomal subunit protein uS8 from Francisella tularensis subsp. tularensis (strain FSC 198).